Consider the following 370-residue polypeptide: Propane 2-monooxygenase, reductase component (370 aa).

Basic residues predominate over residues 1–14 (MAPRPLRRHPPLHH). Residues 1-21 (MAPRPLRRHPPLHHSFHESRR) are disordered. A 2Fe-2S ferredoxin-type domain is found at 28 to 118 (HRINFEPVDI…DCTIELLNFD (91 aa)). The [2Fe-2S] cluster site is built by Cys-62, Cys-67, Cys-70, and Cys-102. Residues 128-229 (IQDVRTRVTR…TGPYGSFTIK (102 aa)) form the FAD-binding FR-type domain.

Belongs to the TmoA/XamoA family. In terms of assembly, the propane 2-monooxygenase multicomponent enzyme system is composed of an electron transfer component and a monooxygenase component interacting with the effector protein PrmD. The electron transfer component is composed of a reductase (PrmB), and the monooxygenase component is formed by a large subunit (PrmA) and a small subunit (PrmC). Requires FAD as cofactor. [2Fe-2S] cluster serves as cofactor.

Reductase component of the propane 2-monooxygenase multicomponent enzyme system which is involved in the degradation of propane via the O2-dependent hydroxylation of propane. Reductase catalyzes the transfer of electrons from NADH or NADPH to monooxygenase. The sequence is that of Propane 2-monooxygenase, reductase component from Rhodococcus jostii (strain RHA1).